The primary structure comprises 607 residues: Monocarboxylate transporter 7 (607 aa).

The interval 1–84 (MRASGQGPQR…PAETGCSRSR (84 aa)) is disordered. Over 1–105 (MRASGQGPQR…ANVYTQVPDG (105 aa)) the chain is Cytoplasmic. Residues 106–126 (GWGWAVAVSFFFVEVFTYGII) form a helical membrane-spanning segment. Topologically, residues 127-146 (KSFGVFFNDLMDSFDESNSK) are extracellular. Residues 147-167 (ISWIISICVFVLTFTAPLSTV) form a helical membrane-spanning segment. The Cytoplasmic portion of the chain corresponds to 168 to 175 (LSNRFGHR). The helical transmembrane segment at 176-196 (LVVMAGGLLISLGMITASFSQ) threads the bilayer. Residues 197 to 202 (RVYHMY) lie on the Extracellular side of the membrane. The chain crosses the membrane as a helical span at residues 203 to 223 (ISIGVISGLGYCFSFLPTVTI). The Cytoplasmic segment spans residues 224-233 (LSQYFDKRRS). Residues 234-254 (VVTAVASTGECFAVFAFAPAI) traverse the membrane as a helical segment. At 255-268 (TALKEHIGWRYSLL) the chain is on the extracellular side. A helical membrane pass occupies residues 269–289 (FVGLLQLNIMVCGALLRPIII). Topologically, residues 290–383 (QGPGQSPKAV…KEKSFICYAL (94 aa)) are cytoplasmic. Residues Ser-319, Ser-322, Ser-325, and Ser-332 each carry the phosphoserine modification. Residues 384-404 (FGLFATLGFFAPSLYIIPLGI) form a helical membrane-spanning segment. The Extracellular portion of the chain corresponds to 405-414 (SLGIDPDRAA). A helical membrane pass occupies residues 415-435 (FLLSTMAIAEVFGRIGAGFVL). Topologically, residues 436-442 (NREPIRK) are cytoplasmic. The helical transmembrane segment at 443-463 (IYIELICVILLTASLFAFTFA) threads the bilayer. At 464-465 (TE) the chain is on the extracellular side. The helical transmembrane segment at 466 to 486 (FWGLMLCSVFFGSMVGTIGGT) threads the bilayer. Topologically, residues 487–507 (HIPMLAEDDVVGIEKMSSAAG) are cytoplasmic. Residues 508–528 (VYVFIQSISGLAGPPLAGLLV) traverse the membrane as a helical segment. Residues 529-536 (DQSKIYSR) lie on the Extracellular side of the membrane. A helical transmembrane segment spans residues 537–557 (AFYSCAAGMCLAAVCLALVRP). Topologically, residues 558-607 (CKKGLCQNSHSGENQTDRQRGKALQDIPEDFLEMDLGKCEHRAHMKMDPV) are cytoplasmic.

Belongs to the major facilitator superfamily. Monocarboxylate porter (TC 2.A.1.13) family. As to quaternary structure, forms functional complexes with BSG/CD147 or EMB/GP70 ancillary proteins.

It is found in the basolateral cell membrane. The catalysed reaction is taurine(out) = taurine(in). Functionally, monocarboxylate transporter selective for taurine. May associate with BSG/CD147 or EMB/GP70 ancillary proteins to mediate facilitative efflux or influx of taurine across the plasma membrane. The transport is pH- and sodium-independent. Rather low-affinity, is likely effective for taurine transport in tissues where taurine is present at high concentrations. This chain is Monocarboxylate transporter 7, found in Mus musculus (Mouse).